Reading from the N-terminus, the 170-residue chain is Zinc finger matrin-type protein 5 (170 aa).

A C3H1-type zinc finger spans residues 51 to 79 (EQNKRPCRKFLLTGQCDFGSNCRFSHMSE). The tract at residues 150 to 170 (PPSLRAPPPGGWPLQPRVQWG) is disordered.

Component of the U11/U12 snRNPs that are part of the U12-type spliceosome. Not found in the major spliceosome.

The protein localises to the nucleus. This is Zinc finger matrin-type protein 5 (ZMAT5) from Homo sapiens (Human).